We begin with the raw amino-acid sequence, 428 residues long: 3-phosphoshikimate 1-carboxyvinyltransferase (428 aa).

3-phosphoshikimate contacts are provided by Lys-23, Ser-24, and Arg-28. Phosphoenolpyruvate is bound at residue Lys-23. Positions 97 and 125 each coordinate phosphoenolpyruvate. Positions 170, 171, 172, 198, 314, 337, and 341 each coordinate 3-phosphoshikimate. Gln-172 is a binding site for phosphoenolpyruvate. Asp-314 acts as the Proton acceptor in catalysis. Phosphoenolpyruvate is bound by residues Arg-345, Arg-387, and Lys-412.

The protein belongs to the EPSP synthase family. As to quaternary structure, monomer.

The protein resides in the cytoplasm. It carries out the reaction 3-phosphoshikimate + phosphoenolpyruvate = 5-O-(1-carboxyvinyl)-3-phosphoshikimate + phosphate. It participates in metabolic intermediate biosynthesis; chorismate biosynthesis; chorismate from D-erythrose 4-phosphate and phosphoenolpyruvate: step 6/7. Functionally, catalyzes the transfer of the enolpyruvyl moiety of phosphoenolpyruvate (PEP) to the 5-hydroxyl of shikimate-3-phosphate (S3P) to produce enolpyruvyl shikimate-3-phosphate and inorganic phosphate. This is 3-phosphoshikimate 1-carboxyvinyltransferase from Edwardsiella ictaluri (strain 93-146).